Reading from the N-terminus, the 181-residue chain is Photosystem I assembly protein Ycf4 (181 aa).

The next 2 membrane-spanning stretches (helical) occupy residues 19–39 (YFWA…GISS) and 62–82 (VMMF…LTII).

This sequence belongs to the Ycf4 family.

Its subcellular location is the plastid. The protein resides in the chloroplast thylakoid membrane. Seems to be required for the assembly of the photosystem I complex. The polypeptide is Photosystem I assembly protein Ycf4 (Phaeodactylum tricornutum (strain CCAP 1055/1)).